An 86-amino-acid chain; its full sequence is Large ribosomal subunit protein eL20 (86 aa).

It belongs to the eukaryotic ribosomal protein eL20 family. In terms of assembly, part of the 50S ribosomal subunit. Binds 23S rRNA.

The sequence is that of Large ribosomal subunit protein eL20 from Saccharolobus islandicus (strain Y.N.15.51 / Yellowstone #2) (Sulfolobus islandicus).